Consider the following 212-residue polypeptide: Golgi-associated RAB2 interactor protein 5A (212 aa).

Disordered regions lie at residues 1-21 (MKGGRDLKAARGGADRPLAPA) and 162-212 (PFTH…LWGL). The span at 169 to 185 (APEEEEEEEEEEEEEEV) shows a compositional bias: acidic residues.

The protein belongs to the GARIN family. Interacts (via N-terminus) with RAB2B (in GTP-bound form). Expressed in testis (at protein level).

The protein resides in the golgi apparatus. Functionally, RAB2B effector protein which promotes cytosolic DNA-induced innate immune responses. Regulates IFN responses against DNA viruses by regulating the CGAS-STING signaling axis. This Mus musculus (Mouse) protein is Golgi-associated RAB2 interactor protein 5A.